The following is a 340-amino-acid chain: Organic solute transporter subunit alpha (340 aa).

Residues 1-48 (MEPGRTQIKLDPRYTADLLEVLKTNYGIPSACFSQPPTAAQLLRALGP) lie on the Extracellular side of the membrane. The chain crosses the membrane as a helical span at residues 49–69 (VELALTSILTLLALGSIAIFL). The Cytoplasmic portion of the chain corresponds to 70–87 (EDAVYLYKNTLCPIKRRT). The chain crosses the membrane as a helical span at residues 88-108 (LLWKSSAPTVVSVLCCFGLWI). Residues 109–118 (PRSLVLVEMT) lie on the Extracellular side of the membrane. The helical transmembrane segment at 119–139 (ITSFYAVCFYLLMLVMVEGFG) threads the bilayer. Over 140-181 (GKEAVLRTLRDTPMMVHTGPCCCCCPCCPRLLLTRKKLQLLM) the chain is Cytoplasmic. Residues 182–202 (LGPFQYAFLKITLTLVGLFLV) traverse the membrane as a helical segment. Over 203–218 (PDGIYDPADISEGSTA) the chain is Extracellular. The chain crosses the membrane as a helical span at residues 219-239 (LWINTFLGVSTLLALWTLGII). Over 240–255 (SRQARLHLGEQNMGAK) the chain is Cytoplasmic. Residues 256-276 (FALFQVLLILTALQPSIFSVL) traverse the membrane as a helical segment. Topologically, residues 277–294 (ANGGQIACSPPYSSKTRS) are extracellular. The chain crosses the membrane as a helical span at residues 295-317 (QVMNCHLLILETFLMTVLTRMYY). The Cytoplasmic segment spans residues 318-340 (RRKDHKVGYETFSSPDLDLNLKA). Position 330 is a phosphoserine (S330).

It belongs to the OST-alpha family. Interacts with SLC51B. The Ost-alpha/Ost-beta complex is a heterodimer composed of alpha (SLC51A) and beta (SLC51B) subunit. Widely expressed with a high expression in ileum. Expressed in testis, colon, liver, small intestine, kidney, ovary and adrenal gland; and at low levels in heart, lung, brain, pituitary, thyroid gland, uterus, prostate, mammary gland and fat.

Its subcellular location is the cell membrane. The protein localises to the endoplasmic reticulum membrane. The catalysed reaction is taurocholate(out) = taurocholate(in). The enzyme catalyses estrone 3-sulfate(out) = estrone 3-sulfate(in). It catalyses the reaction dehydroepiandrosterone 3-sulfate(out) = dehydroepiandrosterone 3-sulfate(in). It carries out the reaction tauroursodeoxycholate(out) = tauroursodeoxycholate(in). The catalysed reaction is glycoursodeoxycholate(out) = glycoursodeoxycholate(in). The enzyme catalyses glycocholate(out) = glycocholate(in). It catalyses the reaction taurochenodeoxycholate(out) = taurochenodeoxycholate(in). It carries out the reaction glycochenodeoxycholate(out) = glycochenodeoxycholate(in). The catalysed reaction is taurodeoxycholate(out) = taurodeoxycholate(in). The enzyme catalyses glycodeoxycholate(out) = glycodeoxycholate(in). It catalyses the reaction prostaglandin E2(out) = prostaglandin E2(in). In terms of biological role, essential component of the Ost-alpha/Ost-beta complex, a heterodimer that acts as the intestinal basolateral transporter responsible for bile acid export from enterocytes into portal blood. Efficiently transports the major species of bile acids (taurocholate). Taurine conjugates are transported more efficiently across the basolateral membrane than glycine-conjugated bile acids. Can also transport steroids such as estrone 3-sulfate and dehydroepiandrosterone 3-sulfate, therefore playing a role in the enterohepatic circulation of sterols. Able to transport eicosanoids such as prostaglandin E2. This chain is Organic solute transporter subunit alpha (SLC51A), found in Homo sapiens (Human).